Consider the following 350-residue polypeptide: Serine/threonine-protein kinase SRK2F (350 aa).

The Protein kinase domain maps to 4–260 (YDILRDLGSG…VPEIEKHPWF (257 aa)). ATP-binding positions include 10–18 (LGSGNFGVA) and Lys-33. Asp-123 (proton acceptor) is an active-site residue. Positions 270 to 303 (EEEKCDNGVEEEEEEEEKCRQSVEEIVKIIEEAR) form a coiled coil.

The protein belongs to the protein kinase superfamily. Ser/Thr protein kinase family. In terms of tissue distribution, expressed in seedlings.

It carries out the reaction L-seryl-[protein] + ATP = O-phospho-L-seryl-[protein] + ADP + H(+). The catalysed reaction is L-threonyl-[protein] + ATP = O-phospho-L-threonyl-[protein] + ADP + H(+). This is Serine/threonine-protein kinase SRK2F (SRK2F) from Arabidopsis thaliana (Mouse-ear cress).